Here is a 223-residue protein sequence, read N- to C-terminus: Ribose-5-phosphate isomerase A (223 aa).

Substrate is bound by residues 28-31, 81-84, and 94-97; these read TGST, DGTD, and KGGG. Catalysis depends on glutamate 103, which acts as the Proton acceptor. Position 121 (lysine 121) interacts with substrate.

Belongs to the ribose 5-phosphate isomerase family. In terms of assembly, homodimer.

It carries out the reaction aldehydo-D-ribose 5-phosphate = D-ribulose 5-phosphate. The protein operates within carbohydrate degradation; pentose phosphate pathway; D-ribose 5-phosphate from D-ribulose 5-phosphate (non-oxidative stage): step 1/1. In terms of biological role, catalyzes the reversible conversion of ribose-5-phosphate to ribulose 5-phosphate. The protein is Ribose-5-phosphate isomerase A of Baumannia cicadellinicola subsp. Homalodisca coagulata.